Here is a 680-residue protein sequence, read N- to C-terminus: MSQNHILPQNSITNAVLEWNESGTPVSNDFDDVYFSNDNGLEETRYVFLQQNHLPQRWQEYDQRRFVIGETGFGTGLNFLAVWQWFKEFRSQYPDAPLKELHFVSFEKFPVTKSDLIKAHQAWPELAQFAEQLQEHYPAAVPDCHRLVLEDGMITLDLWFGDIKDCMPQIWMDDKGLIDAWFLDGFAPSKNPEMWNQTLFNNMASLAKKGCTCATFTAAGFVRRGLIEAGFDMKKVKGFGHKREMIAGTLTERTTKANHEVWYARSTKENITDVAIIGGGVASAALATTLIRRGVKVSVYCKDEKSAQGASGNKQGAVYPLLNEKFNSLSRFFAPGFIFARQFIDQAAKHVEFDHDWCGVTQLKWDEKSANKLNKMLEGNFPNELVSSFDIDKTNQMVGLPINMESVHYSLGGWLCPKQLTRGLFEHLSNNPLFTLHCDSEIIALTQNEEQQWLLSTDSNAYQHQAVVVANGHRFTDFEQTKDIPATPVRGQVSHIPTTESLKNLKTVLCYDGYLTPENSKHQTHCIGASYDRRDLDLAFKESDQIENGERLRKCVPNEVWPNDVDTSDNQARVGIRCASRDHLPFIGNVVRFEEMQEEYKNIYKKRHWLREAKDIPVYEGLFCMLTLGSRGLSSAPLLAEALASQIMGDPIPLPNSVLEGLHPGRLWVRRLLKGKPLDI.

The tRNA (mnm(5)s(2)U34)-methyltransferase stretch occupies residues 1–251 (MSQNHILPQN…KREMIAGTLT (251 aa)). Residues 277–680 (IGGGVASAAL…RLLKGKPLDI (404 aa)) form an FAD-dependent cmnm(5)s(2)U34 oxidoreductase region.

This sequence in the N-terminal section; belongs to the methyltransferase superfamily. tRNA (mnm(5)s(2)U34)-methyltransferase family. It in the C-terminal section; belongs to the DAO family. It depends on FAD as a cofactor.

It localises to the cytoplasm. It carries out the reaction 5-aminomethyl-2-thiouridine(34) in tRNA + S-adenosyl-L-methionine = 5-methylaminomethyl-2-thiouridine(34) in tRNA + S-adenosyl-L-homocysteine + H(+). In terms of biological role, catalyzes the last two steps in the biosynthesis of 5-methylaminomethyl-2-thiouridine (mnm(5)s(2)U) at the wobble position (U34) in tRNA. Catalyzes the FAD-dependent demodification of cmnm(5)s(2)U34 to nm(5)s(2)U34, followed by the transfer of a methyl group from S-adenosyl-L-methionine to nm(5)s(2)U34, to form mnm(5)s(2)U34. In Aliivibrio fischeri (strain ATCC 700601 / ES114) (Vibrio fischeri), this protein is tRNA 5-methylaminomethyl-2-thiouridine biosynthesis bifunctional protein MnmC.